A 61-amino-acid polypeptide reads, in one-letter code: Small ribosomal subunit protein uS14 (61 aa).

Zn(2+) is bound by residues C24, C27, C40, and C43.

The protein belongs to the universal ribosomal protein uS14 family. Zinc-binding uS14 subfamily. As to quaternary structure, part of the 30S ribosomal subunit. Contacts proteins S3 and S10. Zn(2+) serves as cofactor.

Its function is as follows. Binds 16S rRNA, required for the assembly of 30S particles and may also be responsible for determining the conformation of the 16S rRNA at the A site. The protein is Small ribosomal subunit protein uS14 of Chloroflexus aurantiacus (strain ATCC 29364 / DSM 637 / Y-400-fl).